Reading from the N-terminus, the 768-residue chain is MSSPAYDVIAALKQEGLKPSDWQEICRRLGREPNRAELGMFGVMWSEHCCYRNSRPLLRGFPTEGPRILVGPGENAGVVDLGEGHRLAFKIESHNHPSAVEPFQGAATGVGGILRDIFTMGARPIALLNALRFGPLEDPVNVGLIEGVVAGIAHYGNCVGVPTVGGEVAFDPSYGGNPLVNAMALGLMETEEIVKSGAQGVGNPVVYVGSTTGRDGMGGASFASAELSADSLDDRPAVQVGDPFLEKGLIEACLEAFSGGDVVAAQDMGAAGLTCSCSEMAAKGGLGVELDLDRVPAREEGMTAYEFLLSESQERMLFVVKAGREEALMQRFRRWGLQAAVVGQVLQEPLVRVLHHGEVAAEVPATALADDTPIEQHELLQEPPADLQELWQWQESQLPALDDPASVLLTLLDDPTIASKRWVHRQYDQQVLANTVVSSGAADAAVVRLRPQQGQGSMESVQRGVAATVDCPNRWVALDPERGAQAAVAEAARNLSCVGAEPLAITDNLNFPSPETPKGYWQLAMACRGIAEACRALNTPVTGGNVSLYNETRRDDGTLQPIHPTPVVGMVGLVENIERVVGLGWRQPGDAVLLLGVAPDEQGDDRLGLAGSSYQMLVSGVLAGRPPRVDFELERGVQQLLRQAIDAGLLASAHDSSDGGLAVALAESSIASSLGVELKLNGRPEGLTRTLFAEGGARVAISVKAECRPQWDQLAAESTVPITELGVVNDGSTFRIHCGEKDVQWSLADLKRAHQEGLPRRIGGEAES.

H48 is an active-site residue. ATP-binding residues include Y51 and K90. E92 is a binding site for Mg(2+). Residues 93 to 96 (SHNH) and R115 contribute to the substrate site. H94 serves as the catalytic Proton acceptor. Residue D116 participates in Mg(2+) binding. Position 239 (Q239) interacts with substrate. D267 serves as a coordination point for Mg(2+). Position 311-313 (311-313 (ESQ)) interacts with substrate. The ATP site is built by D507 and G544. N545 is a Mg(2+) binding site. S547 lines the substrate pocket.

The protein belongs to the FGAMS family. In terms of assembly, monomer. Part of the FGAM synthase complex composed of 1 PurL, 1 PurQ and 2 PurS subunits.

The protein localises to the cytoplasm. The catalysed reaction is N(2)-formyl-N(1)-(5-phospho-beta-D-ribosyl)glycinamide + L-glutamine + ATP + H2O = 2-formamido-N(1)-(5-O-phospho-beta-D-ribosyl)acetamidine + L-glutamate + ADP + phosphate + H(+). The protein operates within purine metabolism; IMP biosynthesis via de novo pathway; 5-amino-1-(5-phospho-D-ribosyl)imidazole from N(2)-formyl-N(1)-(5-phospho-D-ribosyl)glycinamide: step 1/2. Functionally, part of the phosphoribosylformylglycinamidine synthase complex involved in the purines biosynthetic pathway. Catalyzes the ATP-dependent conversion of formylglycinamide ribonucleotide (FGAR) and glutamine to yield formylglycinamidine ribonucleotide (FGAM) and glutamate. The FGAM synthase complex is composed of three subunits. PurQ produces an ammonia molecule by converting glutamine to glutamate. PurL transfers the ammonia molecule to FGAR to form FGAM in an ATP-dependent manner. PurS interacts with PurQ and PurL and is thought to assist in the transfer of the ammonia molecule from PurQ to PurL. This Parasynechococcus marenigrum (strain WH8102) protein is Phosphoribosylformylglycinamidine synthase subunit PurL.